The sequence spans 215 residues: Thymidylate kinase (215 aa).

G13 to S20 provides a ligand contact to ATP.

It belongs to the thymidylate kinase family.

It carries out the reaction dTMP + ATP = dTDP + ADP. Phosphorylation of dTMP to form dTDP in both de novo and salvage pathways of dTTP synthesis. The polypeptide is Thymidylate kinase (Shewanella frigidimarina (strain NCIMB 400)).